The sequence spans 1216 residues: Probable phospholipid-transporting ATPase 4 (1216 aa).

Residues 1 to 74 (MARGRIRSKL…TTRYNLITFF (74 aa)) are Cytoplasmic-facing. Residues 75-96 (PKCLYEQFHRAANFYFLVAAIL) form a helical membrane-spanning segment. Over 97-100 (SVFP) the chain is Extracellular. The chain crosses the membrane as a helical span at residues 101 to 123 (LSPFNKWSMIAPLVFVVGLSMLK). At 124-305 (EALEDWSRFM…SRIEKTMDYI (182 aa)) the chain is on the cytoplasmic side. Residues 306–327 (IYTLLVLLILISCISSSGFAWE) traverse the membrane as a helical segment. At 328 to 359 (TKFHMPKWWYLRPEEPENLTNPSNPVYAGFVH) the chain is on the extracellular side. A helical membrane pass occupies residues 360–377 (LITALLLYGYLIPISLYV). Topologically, residues 378–922 (SIEVVKVLQA…HGHWCYKRIA (545 aa)) are cytoplasmic. Asp-425 functions as the 4-aspartylphosphate intermediate in the catalytic mechanism. Residue Lys-605 forms a Glycyl lysine isopeptide (Lys-Gly) (interchain with G-Cter in ubiquitin) linkage. Residues Asp-867 and Asp-871 each contribute to the Mg(2+) site. A helical membrane pass occupies residues 923–942 (QMICYFFYKNIAFGLTLFYF). Over 943–956 (EAFTGFSGQSVYND) the chain is Extracellular. The chain crosses the membrane as a helical span at residues 957–976 (YYLLLFNVVLTSLPVIALGV). Topologically, residues 977–1006 (FEQDVSSEICLQFPALYQQGKKNLFFDWYR) are cytoplasmic. A helical transmembrane segment spans residues 1007–1029 (ILGWMGNGVYSSLVIFFLNIGII). Topologically, residues 1030–1042 (YEQAFRVSGQTAD) are extracellular. Residues 1043–1065 (MDAVGTTMFTCIIWAVNVQIALT) traverse the membrane as a helical segment. Residues 1066–1071 (VSHFTW) lie on the Cytoplasmic side of the membrane. Residues 1072 to 1092 (IQHVLIWGSIGLWYLFVALYG) traverse the membrane as a helical segment. At 1093–1109 (MMPPSLSGNIYRILVEI) the chain is on the extracellular side. A helical membrane pass occupies residues 1110 to 1134 (LAPAPIYWIATFLVTVTTVLPYFAH). At 1135 to 1216 (ISFQRFLHPL…TQDTMSPRSV (82 aa)) the chain is on the cytoplasmic side. Positions 1195–1216 (LNKKQSNMSQFSTQDTMSPRSV) are disordered. Polar residues predominate over residues 1198–1216 (KQSNMSQFSTQDTMSPRSV).

It belongs to the cation transport ATPase (P-type) (TC 3.A.3) family. Type IV subfamily.

The protein resides in the membrane. It catalyses the reaction ATP + H2O + phospholipidSide 1 = ADP + phosphate + phospholipidSide 2.. Its function is as follows. Involved in transport of phospholipids. In Arabidopsis thaliana (Mouse-ear cress), this protein is Probable phospholipid-transporting ATPase 4.